A 712-amino-acid chain; its full sequence is NURS complex subunit red1 (712 aa).

Residues 1 to 22 show a composition bias toward basic and acidic residues; that stretch reads MSRSINLDELRKKALESKKKNE. 3 disordered regions span residues 1-71, 107-195, and 323-348; these read MSRS…DRFP, NKTF…TTNQ, and DDFS…GLTM. Residues 5-32 are a coiled coil; sequence INLDELRKKALESKKKNEEDESNDSDKE. Residues 23–42 show a composition bias toward acidic residues; that stretch reads EDESNDSDKEDGEISEDDPV. Over residues 130-141 the composition is skewed to low complexity; it reads SETSDSSNTSQS. Composition is skewed to polar residues over residues 178–193 and 327–348; these read FLST…SKTT and NSKI…GLTM. Residues 351 to 379 adopt a coiled-coil conformation; sequence SDYLALLRNKEEEIRRMTKLILRLESNKK. The interval 428-447 is disordered; the sequence is PSISSSGASSSAATTNSDTT. A coiled-coil region spans residues 471–501; sequence AQIKKSEIDILNNLIEKEEGELTKYQTLVKS. Over residues 545-567 the composition is skewed to polar residues; that stretch reads QADENSSQILSSKTSNAPNGTTE. Residues 545–568 form a disordered region; it reads QADENSSQILSSKTSNAPNGTTET. The segment at 618–639 adopts a C3H1-type zinc-finger fold; sequence FCKYETTGGVCNDDHCEASHFR.

As to quaternary structure, interacts with mmi1, pla1 and rrp6.

It localises to the nucleus. Functionally, promotes the exosome-mediated degradation of mRNAs containing a DSR (determinant of selective removal) signal sequence from mitotic cells. The protein is NURS complex subunit red1 of Schizosaccharomyces pombe (strain 972 / ATCC 24843) (Fission yeast).